The sequence spans 121 residues: SPbeta prophage-derived uncharacterized protein YorW (121 aa).

In Bacillus subtilis (strain 168), this protein is SPbeta prophage-derived uncharacterized protein YorW (yorW).